Consider the following 89-residue polypeptide: Small ribosomal subunit protein uS14 (89 aa).

The protein belongs to the universal ribosomal protein uS14 family. As to quaternary structure, part of the 30S ribosomal subunit. Contacts proteins S3 and S10.

Binds 16S rRNA, required for the assembly of 30S particles and may also be responsible for determining the conformation of the 16S rRNA at the A site. The sequence is that of Small ribosomal subunit protein uS14 from Leuconostoc citreum (strain KM20).